We begin with the raw amino-acid sequence, 65 residues long: Antimicrobial peptide THP1 (65 aa).

Positions 1–25 (MRIVYLLFPFILLLAQGAAGSSLAL) are cleaved as a signal peptide. Cystine bridges form between C31-C53, C38-C59, and C43-C60. The propeptide occupies 61–65 (KTLLG).

This sequence belongs to the beta-defensin family.

The protein resides in the secreted. Functionally, bactericidal activity; inhibits S.aureus and E.coli. The chain is Antimicrobial peptide THP1 from Meleagris gallopavo (Wild turkey).